The primary structure comprises 208 residues: High frequency lysogenization protein HflD homolog (208 aa).

The stretch at 91 to 125 (LMVLERKLNANKQAMNQLGERLGQLERQLAHFDLE) forms a coiled coil.

This sequence belongs to the HflD family.

It is found in the cytoplasm. It localises to the cell inner membrane. The protein is High frequency lysogenization protein HflD homolog of Serratia proteamaculans (strain 568).